We begin with the raw amino-acid sequence, 349 residues long: tRNA pseudouridine synthase D (349 aa).

Substrate is bound at residue phenylalanine 27. Aspartate 80 serves as the catalytic Nucleophile. Asparagine 129 contacts substrate. One can recognise a TRUD domain in the interval 155–303 (GVPNYFGAQR…VEAARRAMLL (149 aa)). Phenylalanine 329 contributes to the substrate binding site.

It belongs to the pseudouridine synthase TruD family.

It carries out the reaction uridine(13) in tRNA = pseudouridine(13) in tRNA. Functionally, responsible for synthesis of pseudouridine from uracil-13 in transfer RNAs. The protein is tRNA pseudouridine synthase D of Escherichia coli (strain 55989 / EAEC).